The primary structure comprises 306 residues: MAKALSLTIFLFLLIASNVQSARLLDEVQTQPQLVPQVPEEEDDSPQAVTTTPTPIPLPGPATGGPEPILEFFMHDVLGGSHPSARVVTGIVAQTEVNGIPFSKSSNNIFPVDNAVPLVNANSINNLINPNTAPLLTGLSGSQANTVIQNSNGNSQGSLSSNNLPFVTTGQLPPIAALQQLMFGSITVVDDELTEGHELGSAIIGRAQGFYLASSLDGTSQTLSLTVLLHEDHDHHDTLDDAISFFGVHRTASHASHIAVVGGTGRFEHAKGYAVVETLHNQEDQHVTDGHDTILHFSVYLTYYKA.

The signal sequence occupies residues 1–21 (MAKALSLTIFLFLLIASNVQS). The tract at residues 36–61 (PQVPEEEDDSPQAVTTTPTPIPLPGP) is disordered.

The protein belongs to the plant dirigent protein family. In terms of assembly, homodimer.

It localises to the secreted. It is found in the extracellular space. Its subcellular location is the apoplast. Dirigent proteins impart stereoselectivity on the phenoxy radical-coupling reaction, yielding optically active lignans from two molecules of coniferyl alcohol in the biosynthesis of lignans, flavonolignans, and alkaloids and thus plays a central role in plant secondary metabolism. The sequence is that of Dirigent protein 24 (DIR24) from Arabidopsis thaliana (Mouse-ear cress).